A 338-amino-acid polypeptide reads, in one-letter code: tRNA N6-adenosine threonylcarbamoyltransferase (338 aa).

Histidine 111 and histidine 115 together coordinate Fe cation. Substrate contacts are provided by residues 134–138 (LVSGG), aspartate 167, glycine 180, and asparagine 272. Residue aspartate 300 participates in Fe cation binding.

This sequence belongs to the KAE1 / TsaD family. Requires Fe(2+) as cofactor.

It is found in the cytoplasm. The catalysed reaction is L-threonylcarbamoyladenylate + adenosine(37) in tRNA = N(6)-L-threonylcarbamoyladenosine(37) in tRNA + AMP + H(+). Functionally, required for the formation of a threonylcarbamoyl group on adenosine at position 37 (t(6)A37) in tRNAs that read codons beginning with adenine. Is involved in the transfer of the threonylcarbamoyl moiety of threonylcarbamoyl-AMP (TC-AMP) to the N6 group of A37, together with TsaE and TsaB. TsaD likely plays a direct catalytic role in this reaction. This chain is tRNA N6-adenosine threonylcarbamoyltransferase, found in Shewanella denitrificans (strain OS217 / ATCC BAA-1090 / DSM 15013).